Reading from the N-terminus, the 128-residue chain is Secreted RxLR effector protein RXLR-C09 (128 aa).

An N-terminal signal peptide occupies residues Met1–Ser22. A RxLR-dEER motif is present at residues Arg58–Arg75.

It belongs to the RxLR effector family.

The protein localises to the secreted. The protein resides in the host cell membrane. Its subcellular location is the host nucleus. Functionally, secreted effector that suppresses pattern-triggered immunity (PTI) in plant host. The sequence is that of Secreted RxLR effector protein RXLR-C09 from Plasmopara halstedii (Downy mildew of sunflower).